The primary structure comprises 104 residues: uncharacterized protein (104 aa).

Residues 42–104 (ARDSFDQDFE…AREERHKLGR (63 aa)) are a coiled coil.

The protein belongs to the WXG100 family.

This is an uncharacterized protein from Bacillus subtilis (strain 168).